The primary structure comprises 264 residues: NAD kinase (264 aa).

Asp-45 acts as the Proton acceptor in catalysis. NAD(+) contacts are provided by residues 45–46 (DG), 121–122 (NE), Arg-147, Asp-149, Ala-184, and Gln-221.

Belongs to the NAD kinase family. The cofactor is a divalent metal cation.

It localises to the cytoplasm. The catalysed reaction is NAD(+) + ATP = ADP + NADP(+) + H(+). Its function is as follows. Involved in the regulation of the intracellular balance of NAD and NADP, and is a key enzyme in the biosynthesis of NADP. Catalyzes specifically the phosphorylation on 2'-hydroxyl of the adenosine moiety of NAD to yield NADP. The chain is NAD kinase from Leuconostoc mesenteroides subsp. mesenteroides (strain ATCC 8293 / DSM 20343 / BCRC 11652 / CCM 1803 / JCM 6124 / NCDO 523 / NBRC 100496 / NCIMB 8023 / NCTC 12954 / NRRL B-1118 / 37Y).